The primary structure comprises 391 residues: Probable acridone synthase 4 (391 aa).

The active site involves C164.

Belongs to the thiolase-like superfamily. Chalcone/stilbene synthases family.

It catalyses the reaction N-methylanthraniloyl-CoA + 3 malonyl-CoA + 3 H(+) = 1,3-dihydroxy-N-methylacridone + 3 CO2 + 4 CoA + H2O. The polypeptide is Probable acridone synthase 4 (ACS4) (Ruta graveolens (Common rue)).